We begin with the raw amino-acid sequence, 292 residues long: NAD kinase (292 aa).

The active-site Proton acceptor is aspartate 72. Residues 72–73, 146–147, histidine 157, arginine 174, aspartate 176, and 187–192 contribute to the NAD(+) site; these read DG, NE, and TAYALS.

This sequence belongs to the NAD kinase family. A divalent metal cation is required as a cofactor.

Its subcellular location is the cytoplasm. The catalysed reaction is NAD(+) + ATP = ADP + NADP(+) + H(+). Functionally, involved in the regulation of the intracellular balance of NAD and NADP, and is a key enzyme in the biosynthesis of NADP. Catalyzes specifically the phosphorylation on 2'-hydroxyl of the adenosine moiety of NAD to yield NADP. The sequence is that of NAD kinase from Shewanella oneidensis (strain ATCC 700550 / JCM 31522 / CIP 106686 / LMG 19005 / NCIMB 14063 / MR-1).